A 569-amino-acid chain; its full sequence is RNA demethylase ALKBH10B (569 aa).

Residues 118–151 (QKVAAKKAEDLKQKKTEEEAEEDLKEVVATEEEE) adopt a coiled-coil conformation. Residues 164–190 (ENDVNGDVEDVEDDSPTSDITDSGSHQ) are disordered. The span at 167 to 179 (VNGDVEDVEDDSP) shows a compositional bias: acidic residues. Over residues 180 to 189 (TSDITDSGSH) the composition is skewed to polar residues. Fe cation is bound by residues His-366, Glu-368, and His-421. A 2-oxoglutarate-binding site is contributed by Arg-430. Over residues 531–545 (KHVKHLPPRAQKKRL) the composition is skewed to basic residues. The segment at 531–569 (KHVKHLPPRAQKKRLLPLPPAASSSPAGGSTSEPVITVG) is disordered. Residues 551–560 (AASSSPAGGS) are compositionally biased toward low complexity.

Belongs to the alkB family. Fe(2+) is required as a cofactor.

The catalysed reaction is an N(6)-methyladenosine in mRNA + 2-oxoglutarate + O2 = an adenosine in mRNA + formaldehyde + succinate + CO2. Dioxygenase that demethylates RNA by oxidative demethylation: specifically demethylates N(6)-methyladenosine (m6A) RNA, the most prevalent internal modification of messenger RNA (mRNA) in higher eukaryotes. ALKBH10B-mediated mRNA m6A demethylation stabilizes the mRNA of the key flowering time regulators FT, SPL3 and SPL9, which are involved in the control of floral transition. This Arabidopsis thaliana (Mouse-ear cress) protein is RNA demethylase ALKBH10B.